Here is a 130-residue protein sequence, read N- to C-terminus: Small ribosomal subunit protein uS9 (130 aa).

The disordered stretch occupies residues 109–130; it reads RMKERKKYGLKKARRAPQFSKR. Positions 111 to 130 are enriched in basic residues; it reads KERKKYGLKKARRAPQFSKR.

This sequence belongs to the universal ribosomal protein uS9 family.

This Clostridium kluyveri (strain NBRC 12016) protein is Small ribosomal subunit protein uS9.